The following is a 433-amino-acid chain: Probable mannose-6-phosphate isomerase (433 aa).

Zn(2+)-binding residues include glutamine 103, histidine 105, glutamate 130, and histidine 277. The active site involves arginine 296.

Belongs to the mannose-6-phosphate isomerase type 1 family. Zn(2+) is required as a cofactor.

Its subcellular location is the cytoplasm. The enzyme catalyses D-mannose 6-phosphate = D-fructose 6-phosphate. The protein operates within nucleotide-sugar biosynthesis; GDP-alpha-D-mannose biosynthesis; alpha-D-mannose 1-phosphate from D-fructose 6-phosphate: step 1/2. Its function is as follows. Involved in the synthesis of the GDP-mannose and dolichol-phosphate-mannose required for a number of critical mannosyl transfer reactions. The polypeptide is Probable mannose-6-phosphate isomerase (PMIH) (Echinococcus multilocularis (Fox tapeworm)).